The sequence spans 274 residues: Cytochrome b-c1 complex subunit Rieske, mitochondrial (274 aa).

At 79 to 103 (SHTDVRVPDFSEYRRLEVLDSTKSS) the chain is on the mitochondrial matrix side. The chain crosses the membrane as a helical span at residues 104–140 (RESSEARKGFSYLVTGVTTVGVAYAAKNVVTQFVSSM). Residues 141–274 (SASADVLALA…FTSDDMVIVG (134 aa)) lie on the Mitochondrial intermembrane side of the membrane. The Rieske domain maps to 187-272 (EAAVELSQLR…YEFTSDDMVI (86 aa)). Positions 217, 219, 236, 239, and 241 each coordinate [2Fe-2S] cluster. Cysteines 222 and 238 form a disulfide.

The protein belongs to the Rieske iron-sulfur protein family. Component of the ubiquinol-cytochrome c oxidoreductase (cytochrome b-c1 complex, complex III, CIII), a multisubunit enzyme composed of 11 subunits. The complex is composed of 3 respiratory subunits cytochrome b, cytochrome c1 and Rieske protein UQCRFS1, 2 core protein subunits UQCRC1/QCR1 and UQCRC2/QCR2, and 6 low-molecular weight protein subunits UQCRH/QCR6, UQCRB/QCR7, UQCRQ/QCR8, UQCR10/QCR9, UQCR11/QCR10 and subunit 9, the cleavage product of Rieske protein UQCRFS1. The complex exists as an obligatory dimer and forms supercomplexes (SCs) in the inner mitochondrial membrane with NADH-ubiquinone oxidoreductase (complex I, CI) and cytochrome c oxidase (complex IV, CIV), resulting in different assemblies (supercomplex SCI(1)III(2)IV(1) and megacomplex MCI(2)III(2)IV(2)). Incorporation of the Rieske protein UQCRFS1 is the penultimate step in complex III assembly. Interacts with TTC19, which is involved in the clearance of UQCRFS1 fragments. In terms of assembly, component of the ubiquinol-cytochrome c oxidoreductase (cytochrome b-c1 complex, complex III, CIII). Subunit 9 corresponds to the mitochondrial targeting sequence (MTS) of Rieske protein UQCRFS1. It is retained after processing and incorporated inside complex III, where it remains bound to the complex and localizes between the 2 core subunits UQCRC1/QCR1 and UQCRC2/QCR2. [2Fe-2S] cluster is required as a cofactor. Post-translationally, proteolytic processing is necessary for the correct insertion of UQCRFS1 in the complex III dimer. Several fragments are generated during UQCRFS1 insertion, most probably due to the endogenous matrix-processing peptidase (MPP) activity of the 2 core protein subunits UQCRC1/QCR1 and UQCRC2/QCR2, which are homologous to the 2 mitochondrial-processing peptidase (MPP) subunits beta-MPP and alpha-MPP respectively. The action of the protease is also necessary for the clearance of the UQCRFS1 fragments.

The protein localises to the mitochondrion inner membrane. It carries out the reaction a quinol + 2 Fe(III)-[cytochrome c](out) = a quinone + 2 Fe(II)-[cytochrome c](out) + 2 H(+)(out). Its function is as follows. Component of the ubiquinol-cytochrome c oxidoreductase, a multisubunit transmembrane complex that is part of the mitochondrial electron transport chain which drives oxidative phosphorylation. The respiratory chain contains 3 multisubunit complexes succinate dehydrogenase (complex II, CII), ubiquinol-cytochrome c oxidoreductase (cytochrome b-c1 complex, complex III, CIII) and cytochrome c oxidase (complex IV, CIV), that cooperate to transfer electrons derived from NADH and succinate to molecular oxygen, creating an electrochemical gradient over the inner membrane that drives transmembrane transport and the ATP synthase. The cytochrome b-c1 complex catalyzes electron transfer from ubiquinol to cytochrome c, linking this redox reaction to translocation of protons across the mitochondrial inner membrane, with protons being carried across the membrane as hydrogens on the quinol. In the process called Q cycle, 2 protons are consumed from the matrix, 4 protons are released into the intermembrane space and 2 electrons are passed to cytochrome c. The Rieske protein is a catalytic core subunit containing a [2Fe-2S] iron-sulfur cluster. It cycles between 2 conformational states during catalysis to transfer electrons from the quinol bound in the Q(0) site in cytochrome b to cytochrome c1. Incorporation of UQCRFS1 is the penultimate step in complex III assembly. Functionally, component of the ubiquinol-cytochrome c oxidoreductase (cytochrome b-c1 complex, complex III, CIII). UQCRFS1 undergoes proteolytic processing once it is incorporated in the complex III dimer. One of the fragments, called subunit 9, corresponds to its mitochondrial targeting sequence (MTS). The proteolytic processing is necessary for the correct insertion of UQCRFS1 in the complex III dimer, but the persistence of UQCRFS1-derived fragments may prevent newly imported UQCRFS1 to be processed and assembled into complex III and is detrimental for the complex III structure and function. The protein is Cytochrome b-c1 complex subunit Rieske, mitochondrial (UQCRFS1) of Pongo pygmaeus (Bornean orangutan).